Here is a 289-residue protein sequence, read N- to C-terminus: Bifunctional aminodeoxychorismate lyase / D-amino acid transaminase (289 aa).

Residue Arg-50 coordinates pyridoxal 5'-phosphate. Lys-149 carries the N6-(pyridoxal phosphate)lysine modification. Tyr-153, Thr-216, and Thr-217 together coordinate pyridoxal 5'-phosphate. Residue Ser-252 coordinates 2-oxoglutarate. Ser-253 is a binding site for pyridoxal 5'-phosphate. Positions 254 and 255 each coordinate 2-oxoglutarate.

This sequence belongs to the class-IV pyridoxal-phosphate-dependent aminotransferase family. As to quaternary structure, homodimer. Pyridoxal 5'-phosphate is required as a cofactor.

The catalysed reaction is 4-amino-4-deoxychorismate = 4-aminobenzoate + pyruvate + H(+). The enzyme catalyses D-alanine + 2-oxoglutarate = D-glutamate + pyruvate. The protein operates within cofactor biosynthesis; tetrahydrofolate biosynthesis; 4-aminobenzoate from chorismate: step 2/2. It functions in the pathway cell wall biogenesis; peptidoglycan biosynthesis. In terms of biological role, bifunctional enzyme that catalyzes two enzymatic reactions in biochemically unrelated pathways: acts as an aminodeoxychorismate (ADC) lyase (ADCL) in folate biosynthesis, converting 4-amino-4-deoxychorismate (ADC) to 4-aminobenzoate (PABA), and as a D-amino acid transaminase (DAAT) in peptidoglycan (PG) biosynthesis. DAAT activity is strictly restricted to D-alanine and D-glutamate. May function as a metabolic toggle that alternates between ADCL and DAAT activity, prioritizing the former over the latter in response to substrate accumulation. Bifunctionality of this enzyme provides a failsafe mechanism for a metabolic coupling between nucleic acid and cell wall biosynthesis that appears to ensure prioritization of PABA production over D-alanine/D-glutamate biosynthesis. The chain is Bifunctional aminodeoxychorismate lyase / D-amino acid transaminase from Mycobacterium tuberculosis (strain ATCC 25618 / H37Rv).